A 154-amino-acid polypeptide reads, in one-letter code: Myoglobin (154 aa).

The region spanning 2 to 148 (GLSDGEWQLV…FRKDIAAKYK (147 aa)) is the Globin domain. A Phosphoserine modification is found at Ser4. Residue His65 participates in nitrite binding. O2 is bound at residue His65. Thr68 carries the phosphothreonine modification. His94 is a heme b binding site.

It belongs to the globin family. As to quaternary structure, monomeric.

It localises to the cytoplasm. The protein localises to the sarcoplasm. The enzyme catalyses Fe(III)-heme b-[protein] + nitric oxide + H2O = Fe(II)-heme b-[protein] + nitrite + 2 H(+). It carries out the reaction H2O2 + AH2 = A + 2 H2O. Functionally, monomeric heme protein which primary function is to store oxygen and facilitate its diffusion within muscle tissues. Reversibly binds oxygen through a pentacoordinated heme iron and enables its timely and efficient release as needed during periods of heightened demand. Depending on the oxidative conditions of tissues and cells, and in addition to its ability to bind oxygen, it also has a nitrite reductase activity whereby it regulates the production of bioactive nitric oxide. Under stress conditions, like hypoxia and anoxia, it also protects cells against reactive oxygen species thanks to its pseudoperoxidase activity. In Delphinus delphis (Short-beaked common dolphin), this protein is Myoglobin (MB).